A 512-amino-acid polypeptide reads, in one-letter code: GMP synthase [glutamine-hydrolyzing] (512 aa).

Residues 7 to 197 form the Glutamine amidotransferase type-1 domain; it reads TIIVLDFGSQ…VFGVCGCSEG (191 aa). Catalysis depends on Cys-84, which acts as the Nucleophile. Catalysis depends on residues His-171 and Glu-173. A GMPS ATP-PPase domain is found at 198–387; sequence WNMENFIEVE…LGIPDEIVWR (190 aa). An ATP-binding site is contributed by 225 to 231; the sequence is SGGVDSS.

Homodimer.

The catalysed reaction is XMP + L-glutamine + ATP + H2O = GMP + L-glutamate + AMP + diphosphate + 2 H(+). It participates in purine metabolism; GMP biosynthesis; GMP from XMP (L-Gln route): step 1/1. In terms of biological role, catalyzes the synthesis of GMP from XMP. The polypeptide is GMP synthase [glutamine-hydrolyzing] (Bacillus cereus (strain G9842)).